The chain runs to 261 residues: Methyl-coenzyme M reductase subunit gamma (261 aa).

Residue R123 participates in coenzyme M binding.

Belongs to the methyl-coenzyme M reductase gamma subunit family. In terms of assembly, MCR is a hexamer of two alpha, two beta, and two gamma chains, forming a dimer of heterotrimers. Coenzyme F430 serves as cofactor.

Its subcellular location is the cytoplasm. It catalyses the reaction coenzyme B + methyl-coenzyme M = methane + coenzyme M-coenzyme B heterodisulfide. It participates in one-carbon metabolism; methyl-coenzyme M reduction; methane from methyl-coenzyme M: step 1/1. Functionally, component of the methyl-coenzyme M reductase (MCR) I that catalyzes the reductive cleavage of methyl-coenzyme M (CoM-S-CH3 or 2-(methylthio)ethanesulfonate) using coenzyme B (CoB or 7-mercaptoheptanoylthreonine phosphate) as reductant which results in the production of methane and the mixed heterodisulfide of CoB and CoM (CoM-S-S-CoB). This is the final step in methanogenesis. The sequence is that of Methyl-coenzyme M reductase subunit gamma (mcrG) from Methanococcus voltae.